The chain runs to 149 residues: Transcriptional repressor NrdR (149 aa).

A zinc finger lies at 3–34 (CPFCSAVDTKVIDSRLVAEGHQVRRRRECLLC). Residues 49–139 (PRVIKSNGSR…VYRSFEDIRE (91 aa)) form the ATP-cone domain.

It belongs to the NrdR family. Zn(2+) serves as cofactor.

Its function is as follows. Negatively regulates transcription of bacterial ribonucleotide reductase nrd genes and operons by binding to NrdR-boxes. The protein is Transcriptional repressor NrdR of Aeromonas salmonicida (strain A449).